Reading from the N-terminus, the 819-residue chain is USP6 N-terminal-like protein (819 aa).

Position 1 is an N-acetylmethionine (Met-1). A Rab-GAP TBC domain is found at 100–292 (GIPLQLRGEV…RIWDIYIFEG (193 aa)). The segment covering 355-367 (DLPEPGKEDEYPK) has biased composition (basic and acidic residues). Disordered stretches follow at residues 355–498 (DLPE…ERTT) and 513–678 (LPVA…SRPT). A phosphoserine mark is found at Ser-389, Ser-394, and Ser-398. Basic and acidic residues-rich tracts occupy residues 399–414 (SRRE…EHSP) and 432–449 (KSVD…ESQR). Over residues 464 to 476 (HAAANQNSNAISN) the composition is skewed to low complexity. Basic and acidic residues-rich tracts occupy residues 477–489 (VRKE…RKPS) and 533–542 (KALDGGEGKR). 2 positions are modified to phosphoserine: Ser-544 and Ser-547. Basic and acidic residues predominate over residues 556–571 (ESEHGASAEEGPERTH). Ser-574, Ser-631, Ser-644, Ser-648, Ser-665, Ser-669, and Ser-704 each carry phosphoserine. The segment covering 642-655 (FVSTQISPRPQINP) has biased composition (polar residues). Tyr-717 is modified (phosphotyrosine). A compositionally biased stretch (low complexity) spans 788-802 (ASPPGYPYAGPSPSA). The interval 788-807 (ASPPGYPYAGPSPSAHHYRN) is disordered.

Interacts with EPS8.

Its subcellular location is the golgi apparatus. It is found in the cytoplasmic vesicle. Its function is as follows. Acts as a GTPase-activating protein for RAB5A and RAB43. Involved in receptor trafficking. In complex with EPS8 inhibits internalization of EGFR. Involved in retrograde transport from the endocytic pathway to the Golgi apparatus. Involved in the transport of Shiga toxin from early and recycling endosomes to the trans-Golgi network. Required for structural integrity of the Golgi complex. This chain is USP6 N-terminal-like protein (Usp6nl), found in Mus musculus (Mouse).